Here is a 303-residue protein sequence, read N- to C-terminus: Diaminopimelate epimerase (303 aa).

Positions 15, 47, and 67 each coordinate substrate. Residue Cys76 is the Proton donor of the active site. Residues 77–78 (GN), Asn163, Asn197, and 215–216 (ER) each bind substrate. Cys224 (proton acceptor) is an active-site residue. Position 225-226 (225-226 (GS)) interacts with substrate. The disordered stretch occupies residues 278–303 (FDPATGEWSRDTQGLQGSGNADRGAA).

This sequence belongs to the diaminopimelate epimerase family. Homodimer.

It localises to the cytoplasm. The enzyme catalyses (2S,6S)-2,6-diaminopimelate = meso-2,6-diaminopimelate. Its pathway is amino-acid biosynthesis; L-lysine biosynthesis via DAP pathway; DL-2,6-diaminopimelate from LL-2,6-diaminopimelate: step 1/1. Its function is as follows. Catalyzes the stereoinversion of LL-2,6-diaminopimelate (L,L-DAP) to meso-diaminopimelate (meso-DAP), a precursor of L-lysine and an essential component of the bacterial peptidoglycan. The polypeptide is Diaminopimelate epimerase (Brucella abortus (strain S19)).